The sequence spans 308 residues: GMP synthase [glutamine-hydrolyzing] subunit B (308 aa).

Residues 2-183 (LNPSDFIEEA…LGLPREMIQR (182 aa)) enclose the GMPS ATP-PPase domain. Residue 29 to 35 (SGGVDSS) participates in ATP binding.

Heterodimer composed of a glutamine amidotransferase subunit (A) and a GMP-binding subunit (B).

The enzyme catalyses XMP + L-glutamine + ATP + H2O = GMP + L-glutamate + AMP + diphosphate + 2 H(+). Its pathway is purine metabolism; GMP biosynthesis; GMP from XMP (L-Gln route): step 1/1. Its function is as follows. Catalyzes the synthesis of GMP from XMP. The sequence is that of GMP synthase [glutamine-hydrolyzing] subunit B (guaAB) from Methanothermobacter thermautotrophicus (strain ATCC 29096 / DSM 1053 / JCM 10044 / NBRC 100330 / Delta H) (Methanobacterium thermoautotrophicum).